A 74-amino-acid chain; its full sequence is Translation initiation factor IF-1 (74 aa).

One can recognise an S1-like domain in the interval 1–72 (MSKEDAIEVE…NKGRITYRLK (72 aa)).

This sequence belongs to the IF-1 family. In terms of assembly, component of the 30S ribosomal translation pre-initiation complex which assembles on the 30S ribosome in the order IF-2 and IF-3, IF-1 and N-formylmethionyl-tRNA(fMet); mRNA recruitment can occur at any time during PIC assembly.

Its subcellular location is the cytoplasm. Functionally, one of the essential components for the initiation of protein synthesis. Stabilizes the binding of IF-2 and IF-3 on the 30S subunit to which N-formylmethionyl-tRNA(fMet) subsequently binds. Helps modulate mRNA selection, yielding the 30S pre-initiation complex (PIC). Upon addition of the 50S ribosomal subunit IF-1, IF-2 and IF-3 are released leaving the mature 70S translation initiation complex. This is Translation initiation factor IF-1 from Synechococcus sp. (strain JA-3-3Ab) (Cyanobacteria bacterium Yellowstone A-Prime).